The following is a 705-amino-acid chain: Ribonuclease R (705 aa).

The RNB domain maps to 240–567 (RRDLREQLCF…VHRLLKKALR (328 aa)). Residues 615–696 (GEEFIGIITG…ERARVEFELI (82 aa)) enclose the S1 motif domain.

It belongs to the RNR ribonuclease family. RNase R subfamily.

It is found in the cytoplasm. It catalyses the reaction Exonucleolytic cleavage in the 3'- to 5'-direction to yield nucleoside 5'-phosphates.. 3'-5' exoribonuclease that releases 5'-nucleoside monophosphates and is involved in maturation of structured RNAs. The chain is Ribonuclease R from Aquifex aeolicus (strain VF5).